The chain runs to 168 residues: Acetolactate synthase small subunit (168 aa).

The region spanning 7–82 (TLSVLVEDKP…VIKIVEQDDE (76 aa)) is the ACT domain.

Belongs to the acetolactate synthase small subunit family. As to quaternary structure, dimer of large and small chains.

It catalyses the reaction 2 pyruvate + H(+) = (2S)-2-acetolactate + CO2. It functions in the pathway amino-acid biosynthesis; L-isoleucine biosynthesis; L-isoleucine from 2-oxobutanoate: step 1/4. The protein operates within amino-acid biosynthesis; L-valine biosynthesis; L-valine from pyruvate: step 1/4. The polypeptide is Acetolactate synthase small subunit (ilvH) (Mycobacterium bovis (strain ATCC BAA-935 / AF2122/97)).